The primary structure comprises 117 residues: Large ribosomal subunit protein eL34 (117 aa).

Ser12 is modified (phosphoserine). An N6-acetyllysine mark is found at Lys36 and Lys43. Lys108 is covalently cross-linked (Glycyl lysine isopeptide (Lys-Gly) (interchain with G-Cter in SUMO2)).

This sequence belongs to the eukaryotic ribosomal protein eL34 family. As to quaternary structure, component of the large ribosomal subunit.

Its subcellular location is the cytoplasm. It localises to the cytosol. It is found in the endoplasmic reticulum. Functionally, component of the large ribosomal subunit. The ribosome is a large ribonucleoprotein complex responsible for the synthesis of proteins in the cell. This Mus musculus (Mouse) protein is Large ribosomal subunit protein eL34 (Rpl34).